The following is a 351-amino-acid chain: Dual-specificity RNA methyltransferase RlmN (351 aa).

The Proton acceptor role is filled by glutamate 90. In terms of domain architecture, Radical SAM core spans glutamate 96–aspartate 330. An intrachain disulfide couples cysteine 103 to cysteine 335. [4Fe-4S] cluster-binding residues include cysteine 110, cysteine 114, and cysteine 117. Residues glycine 162–glutamate 163, serine 194, serine 216–histidine 218, and asparagine 292 each bind S-adenosyl-L-methionine. Cysteine 335 serves as the catalytic S-methylcysteine intermediate.

Belongs to the radical SAM superfamily. RlmN family. The cofactor is [4Fe-4S] cluster.

It localises to the cytoplasm. The enzyme catalyses adenosine(2503) in 23S rRNA + 2 reduced [2Fe-2S]-[ferredoxin] + 2 S-adenosyl-L-methionine = 2-methyladenosine(2503) in 23S rRNA + 5'-deoxyadenosine + L-methionine + 2 oxidized [2Fe-2S]-[ferredoxin] + S-adenosyl-L-homocysteine. It carries out the reaction adenosine(37) in tRNA + 2 reduced [2Fe-2S]-[ferredoxin] + 2 S-adenosyl-L-methionine = 2-methyladenosine(37) in tRNA + 5'-deoxyadenosine + L-methionine + 2 oxidized [2Fe-2S]-[ferredoxin] + S-adenosyl-L-homocysteine. Its function is as follows. Specifically methylates position 2 of adenine 2503 in 23S rRNA and position 2 of adenine 37 in tRNAs. m2A2503 modification seems to play a crucial role in the proofreading step occurring at the peptidyl transferase center and thus would serve to optimize ribosomal fidelity. This chain is Dual-specificity RNA methyltransferase RlmN, found in Solidesulfovibrio magneticus (strain ATCC 700980 / DSM 13731 / RS-1) (Desulfovibrio magneticus).